The sequence spans 262 residues: Snake venom serine proteinase 1 (262 aa).

A signal peptide spans 1-18; the sequence is MVLIRVLANLLILQLSYA. Positions 19-24 are excised as a propeptide; sequence QKSSEL. A Peptidase S1 domain is found at 25–253; sequence VIGGDECNIN…HLDWIQSIIA (229 aa). 5 disulfide bridges follow: cysteine 31/cysteine 165, cysteine 52/cysteine 68, cysteine 144/cysteine 214, cysteine 176/cysteine 193, and cysteine 204/cysteine 229. The active-site Charge relay system is histidine 67. A glycan (N-linked (GlcNAc...) asparagine) is linked at asparagine 105. The Charge relay system role is filled by aspartate 112. Serine 208 (charge relay system) is an active-site residue.

Belongs to the peptidase S1 family. Snake venom subfamily. As to quaternary structure, monomer. As to expression, expressed by the venom gland.

Its subcellular location is the secreted. Functionally, snake venom serine protease that may act in the hemostasis system of the prey. This is Snake venom serine proteinase 1 from Crotalus adamanteus (Eastern diamondback rattlesnake).